Here is a 238-residue protein sequence, read N- to C-terminus: Dolichyldiphosphatase 1 (238 aa).

4 consecutive transmembrane segments (helical) span residues 33–53 (LAYLSLSPVFVIVGFVTLIIF), 100–120 (PSSHSQFMWFFSVYSFLFLYL), 130–150 (FLDLLWRHVLSLGLLAAAFLV), and 162–182 (WSQVLYGGIAGGLMAVAWFIF).

It belongs to the dolichyldiphosphatase family.

It is found in the endoplasmic reticulum membrane. The catalysed reaction is a di-trans,poly-cis-dolichyl diphosphate + H2O = a di-trans,poly-cis-dolichyl phosphate + phosphate + H(+). It participates in protein modification; protein glycosylation. Required for efficient N-glycosylation. Necessary for maintaining optimal levels of dolichol-linked oligosaccharides. Hydrolyzes dolichyl pyrophosphate at a very high rate and dolichyl monophosphate at a much lower rate. Does not act on phosphatidate. The chain is Dolichyldiphosphatase 1 (DOLPP1) from Callithrix jacchus (White-tufted-ear marmoset).